We begin with the raw amino-acid sequence, 238 residues long: MSTAAPQENSPELKLSPSSKLNGFEWWRRTLSYQTGLGLNAEEKAQYEFDYNNRNLAEKCQQCNEYRNWMLEYSPSVLFMMDHIKKLTKDKEPILTKENITCDVCDFTKGGGFHPDEGILLCANWIRNKWQLEDILTHELVHVYDYLKFNLDMNNLRHHACTEIRASMLSGECRIWQEIKKTGLGNFGKKFQDCIKRRAVLSVSSNPICKSPEEAEKVVSTVWNSCFNDTRPFERVYR.

His138 serves as a coordination point for a divalent metal cation. Residue Glu139 is part of the active site. His142 contributes to the a divalent metal cation binding site.

It belongs to the peptidase M76 family.

It is found in the mitochondrion inner membrane. Its function is as follows. Has a dual role in the assembly of mitochondrial ATPase. Acts as a protease that removes N-terminal residues of mitochondrial ATPase CF(0) subunit 6 at the intermembrane space side. Also involved in the correct assembly of the membrane-embedded ATPase CF(0) particle, probably mediating association of subunit 6 with the subunit 9 ring. This is Mitochondrial inner membrane protease ATP23 (ATP23) from Candida albicans (strain SC5314 / ATCC MYA-2876) (Yeast).